A 1173-amino-acid polypeptide reads, in one-letter code: AT-rich interactive domain-containing protein 5B (1173 aa).

Lys-130 is covalently cross-linked (Glycyl lysine isopeptide (Lys-Gly) (interchain with G-Cter in SUMO2)). Positions 249 to 283 are disordered; sequence PNLKGRPRKKKPCPQRRDSFSGGKDPNNNSDGKSV. Residues 253-262 show a composition bias toward basic residues; the sequence is GRPRKKKPCP. A Phosphoserine modification is found at Ser-267. An ARID domain is found at 322-414; sequence RADEQAFLVA…LILPYERFIK (93 aa). Lys-340 is subject to N6,N6-dimethyllysine. Residues 416 to 607 form a disordered region; that stretch reads EEDKPLPPIK…QPPLANQSEV (192 aa). Residue Lys-449 forms a Glycyl lysine isopeptide (Lys-Gly) (interchain with G-Cter in SUMO2) linkage. Residues 450–462 are compositionally biased toward basic and acidic residues; the sequence is HEISKSKKEKENA. Glycyl lysine isopeptide (Lys-Gly) (interchain with G-Cter in SUMO2) cross-links involve residues Lys-497 and Lys-499. The span at 547–557 shows a compositional bias: low complexity; that stretch reads SAPLAPTPGTG. Positions 593–605 are enriched in polar residues; that stretch reads GFSTTQPPLANQS. Glycyl lysine isopeptide (Lys-Gly) (interchain with G-Cter in SUMO2) cross-links involve residues Lys-763 and Lys-769. 3 disordered regions span residues 777–802, 877–924, and 936–965; these read EPRF…VEKR, KKSA…GTSQ, and HPKA…KPHP. Residues 782-796 show a composition bias toward basic residues; that stretch reads FSKHHLSPSKKSRGR. Residues Lys-878, Lys-901, Lys-905, and Lys-920 each participate in a glycyl lysine isopeptide (Lys-Gly) (interchain with G-Cter in SUMO2) cross-link. Glycyl lysine isopeptide (Lys-Gly) (interchain with G-Cter in SUMO2) cross-links involve residues Lys-973, Lys-985, and Lys-998. A Phosphoserine modification is found at Ser-1017. Positions 1017–1055 are disordered; the sequence is SPLDPAKEVSGKEKASEQESEGSKAAHSGHSGGTSEGHK. A compositionally biased stretch (basic and acidic residues) spans 1021–1040; that stretch reads PAKEVSGKEKASEQESEGSK. Residues Lys-1040 and Lys-1055 each participate in a glycyl lysine isopeptide (Lys-Gly) (interchain with G-Cter in SUMO2) cross-link. At Ser-1118 the chain carries Phosphoserine.

It belongs to the ARID5B family. In terms of processing, methylation at Lys-340 prevents DNA-binding. Demethylation by PHF2 promotes recruitment of the PHF2-ARID5B complex to promoters.

It localises to the nucleus. Functionally, transcription coactivator that binds to the 5'-AATA[CT]-3' core sequence and plays a key role in adipogenesis and liver development. Acts by forming a complex with phosphorylated PHF2, which mediates demethylation at Lys-340, leading to target the PHF2-ARID5B complex to target promoters, where PHF2 mediates demethylation of dimethylated 'Lys-9' of histone H3 (H3K9me2), followed by transcription activation of target genes. The PHF2-ARID5B complex acts as a coactivator of HNF4A in liver. Required for adipogenesis: regulates triglyceride metabolism in adipocytes by regulating expression of adipogenic genes. Overexpression leads to induction of smooth muscle marker genes, suggesting that it may also act as a regulator of smooth muscle cell differentiation and proliferation. The polypeptide is AT-rich interactive domain-containing protein 5B (ARID5B) (Bos taurus (Bovine)).